Here is a 267-residue protein sequence, read N- to C-terminus: MSDILQKILAVKAEEVAAARKHRDLPSVRAEAEANRHDSTLGPRGFAQALRDKIGAGRAAVIAEVKKASPSKGVLRPDFKPAEIAGSYAEHGAACLSVLTDEQFFQGHADYLREARAACALPALRKDFMVDLYQVYEARSWGADCILLIVSALDQGLMAELEACAHELGMDVLVEVHDGHELERALRLSTPLVGVNNRNLRTFETTLDTTLGLLKHMPDDRIVVTESGILKPDDVRKMRAADVNAFLVGEAFMRADDPGTELARLFA.

The protein belongs to the TrpC family.

The catalysed reaction is 1-(2-carboxyphenylamino)-1-deoxy-D-ribulose 5-phosphate + H(+) = (1S,2R)-1-C-(indol-3-yl)glycerol 3-phosphate + CO2 + H2O. It functions in the pathway amino-acid biosynthesis; L-tryptophan biosynthesis; L-tryptophan from chorismate: step 4/5. This chain is Indole-3-glycerol phosphate synthase 1 (trpC1), found in Ralstonia nicotianae (strain ATCC BAA-1114 / GMI1000) (Ralstonia solanacearum).